The sequence spans 208 residues: Uracil phosphoribosyltransferase (208 aa).

5-phospho-alpha-D-ribose 1-diphosphate contacts are provided by residues Arg78, Arg103, and 130–138 (DPMFATGGT). Residues Ile193 and 198-200 (GDA) contribute to the uracil site. Asp199 serves as a coordination point for 5-phospho-alpha-D-ribose 1-diphosphate.

It belongs to the UPRTase family. It depends on Mg(2+) as a cofactor.

The catalysed reaction is UMP + diphosphate = 5-phospho-alpha-D-ribose 1-diphosphate + uracil. Its pathway is pyrimidine metabolism; UMP biosynthesis via salvage pathway; UMP from uracil: step 1/1. With respect to regulation, allosterically activated by GTP. Its function is as follows. Catalyzes the conversion of uracil and 5-phospho-alpha-D-ribose 1-diphosphate (PRPP) to UMP and diphosphate. The protein is Uracil phosphoribosyltransferase of Campylobacter jejuni (strain RM1221).